Here is a 399-residue protein sequence, read N- to C-terminus: MQETIPDSRGRFGEFGGKYVPETLMSAIEELEAGLAKAMVDPAFIGELKADLAEYAGRETPLTFAKNISAKLGGANIYLKREDLVHTGAHKLNNAIGQGLLAKRMGKNKLVAETGAGQHGVATATVASRLGMECKVFMGVEDMKRQELNVFRMELLGAEVVPAETGSRTLKDATNEAIRYWVSHADDTFYLIGSVVGPHPYPKMVRNFQRVIGDEAKQQMAEKTGRLPDTIVACVGGGSNAIGMFYPFLDDEVELVGVEAAGRGLDTAEHAATISKGSKGIIHGSLTYLLQDESGQIKEPYSISAGLDYPGVGPEHAYLAAQKRVRYEAVTDKEALDALALLAKEEGIIPAIESAHALAKAFQMAKTMTPNQSVLVCLSGRGDKDMHTLQRVYKEGYDE.

Position 91 is an N6-(pyridoxal phosphate)lysine (Lys91).

This sequence belongs to the TrpB family. Tetramer of two alpha and two beta chains. Pyridoxal 5'-phosphate serves as cofactor.

It catalyses the reaction (1S,2R)-1-C-(indol-3-yl)glycerol 3-phosphate + L-serine = D-glyceraldehyde 3-phosphate + L-tryptophan + H2O. Its pathway is amino-acid biosynthesis; L-tryptophan biosynthesis; L-tryptophan from chorismate: step 5/5. Its function is as follows. The beta subunit is responsible for the synthesis of L-tryptophan from indole and L-serine. The polypeptide is Tryptophan synthase beta chain (Shouchella clausii (strain KSM-K16) (Alkalihalobacillus clausii)).